Consider the following 161-residue polypeptide: Troponin C, slow skeletal and cardiac muscles (161 aa).

M1 is modified (N-acetylmethionine). EF-hand domains are found at residues 16 to 51, 52 to 87, 92 to 127, and 128 to 161; these read QKNE…LGQN, PTPE…CMKD, KTEE…TGET, and ITED…KGVE. Residues D65, D67, S69, T71, D105, N107, D109, Y111, E116, N143, D145, R147, and E152 each coordinate Ca(2+).

It belongs to the troponin C family.

Its function is as follows. Troponin is the central regulatory protein of striated muscle contraction. Tn consists of three components: Tn-I which is the inhibitor of actomyosin ATPase, Tn-T which contains the binding site for tropomyosin and Tn-C. The binding of calcium to Tn-C abolishes the inhibitory action of Tn on actin filaments. The polypeptide is Troponin C, slow skeletal and cardiac muscles (TNNC1) (Coturnix japonica (Japanese quail)).